We begin with the raw amino-acid sequence, 447 residues long: Chromosomal replication initiator protein DnaA (447 aa).

The interval 1–79 is domain I, interacts with DnaA modulators; sequence MVSCENLWQQ…TGQEITVKLI (79 aa). Residues 79-105 form a domain II region; it reads ITDGLEPHSLIGQESSLPMETTPKNAT. The interval 106–322 is domain III, AAA+ region; sequence ALNGKYTFSR…GALIRAIAYT (217 aa). ATP is bound by residues G150, G152, K153, and T154. Residues 323-447 form a domain IV, binds dsDNA region; that stretch reads SLSNVAMTVE…INIAGQAPES (125 aa).

It belongs to the DnaA family. Oligomerizes as a right-handed, spiral filament on DNA at oriC.

It is found in the cytoplasm. Its function is as follows. Plays an essential role in the initiation and regulation of chromosomal replication. ATP-DnaA binds to the origin of replication (oriC) to initiate formation of the DNA replication initiation complex once per cell cycle. Binds the DnaA box (a 9 base pair repeat at the origin) and separates the double-stranded (ds)DNA. Forms a right-handed helical filament on oriC DNA; dsDNA binds to the exterior of the filament while single-stranded (ss)DNA is stabiized in the filament's interior. The ATP-DnaA-oriC complex binds and stabilizes one strand of the AT-rich DNA unwinding element (DUE), permitting loading of DNA polymerase. After initiation quickly degrades to an ADP-DnaA complex that is not apt for DNA replication. Binds acidic phospholipids. Isolated domain IV (residues 348-447) binds both E.coli and B.subtilis oriC. The protein is Chromosomal replication initiator protein DnaA of Synechocystis sp. (strain ATCC 27184 / PCC 6803 / Kazusa).